Here is a 105-residue protein sequence, read N- to C-terminus: MRQIDRNFDIQPLQHADMTISLNGQPVTAALGETVLSVIQATGLRQVARNDHGQLVGAYCGMGVCHCCLVQIDGRHKRRACQTLVKPGMQVQTLSNRITETEPTL.

Positions 16–97 (ADMTISLNGQ…GMQVQTLSNR (82 aa)) constitute a 2Fe-2S ferredoxin-type domain. [2Fe-2S] cluster contacts are provided by Cys60, Cys65, Cys68, and Cys81.

As to quaternary structure, heterotrimer of HcnA, HcnB and HcnC.

It localises to the cell membrane. It carries out the reaction glycine + 2 A = hydrogen cyanide + 2 AH2 + CO2. A three-component membrane-bound flavoenzyme that catalyzes the formation of hydrogen cyanide, a secondary metabolite, by transfer of electrons to a cyanide-resistant branch of the aerobic respiratory chain. Contributes to suppression of black root rot of tobacco. This is Hydrogen cyanide synthase subunit HcnA from Pseudomonas protegens (strain DSM 19095 / LMG 27888 / CFBP 6595 / CHA0).